A 705-amino-acid chain; its full sequence is Solute carrier family 28 member 3 (705 aa).

Over residues 1–21 (MSRSDPDPGKNSEPSKSKMSL) the composition is skewed to basic and acidic residues. Residues 1–96 (MSRSDPDPGK…TEEESEDERQ (96 aa)) form a disordered region. The Cytoplasmic segment spans residues 1 to 119 (MSRSDPDPGK…FCRKHRVILQ (119 aa)). Positions 48-63 (APGNSTVRSRVVQSGE) are enriched in polar residues. Over residues 65–74 (GRAKQDDRQI) the composition is skewed to basic and acidic residues. A helical membrane pass occupies residues 120-140 (HTIWAVLLTGFLALVIAACAL). Residues 141-145 (NFHRA) are Extracellular-facing. A helical membrane pass occupies residues 146–166 (LPLFVITLVTIFFVVWDRLMA). Residues 167-190 (KYEQRIDDVLSPGKRLLERHWFWL) lie on the Cytoplasmic side of the membrane. The chain crosses the membrane as a helical span at residues 191-211 (KWVVWCSLILAVILWLALDTA). The Extracellular segment spans residues 212–214 (RLG). Residues 215–236 (QQQLISFGGLVMYIVLLFLFSK) traverse the membrane as a helical segment. At 237–244 (HPTRVYWR) the chain is on the cytoplasmic side. Residues 245–264 (PVFWGIGLQFLLGLLILRTR) form a helical membrane-spanning segment. Residues 265-301 (PGFVAFDWMGKQVQTFLGYTDAGAQFVFGEKYTDHFF) lie on the Extracellular side of the membrane. A helical membrane pass occupies residues 302–322 (AFKILPIVVFFSTVMSMLYYL). At 323–346 (GLMQWIIRKVGWLMLVTMGSSPIE) the chain is on the cytoplasmic side. An intramembrane region (helical) is located at residues 347 to 365 (SVVAAGNIFVGQTESPLLV). Residues 366 to 378 (QPYLPHVTKSELH) are Cytoplasmic-facing. Residues 379-401 (TIMTAGFATIAGSVLGAYISFGV) traverse the membrane as a helical segment. At 402–403 (SS) the chain is on the extracellular side. A helical transmembrane segment spans residues 404 to 425 (THLLTASVMSAPAALAVAKLFW). Residues 426–460 (PETEKPKITLKNAMKMENGDSRNLLEAATQGASSS) lie on the Cytoplasmic side of the membrane. The helical transmembrane segment at 461–486 (IPLVANIAANLIAFLALLSFVNSALS) threads the bilayer. The Extracellular portion of the chain corresponds to 487–524 (WFGSMFDYPQLSFELICSYIFMPFSFMMGVDWQDRFMV). The segment at residues 525 to 544 (AKLIGYKTFFNEFVAYEHLS) is an intramembrane region (helical). Topologically, residues 545–583 (KFINLRKAAGPKFVNGVQQYMSIRSETIATYALCGFANF) are extracellular. Residues 584 to 594 (GSLGIVIGGLT) traverse the membrane as a helical segment. At 595–607 (SIAPSRKRDIASG) the chain is on the cytoplasmic side. Residues 608-630 (AMRALIAGTIACFMTACIAGMLS) form a helical membrane-spanning segment. Topologically, residues 631–705 (DTPVAINCHH…LNCGWIPNIP (75 aa)) are extracellular.

The protein belongs to the concentrative nucleoside transporter (CNT) (TC 2.A.41) family. In terms of assembly, homotrimer. As to expression, expressed in kidney; in the proximal tubule, glomerulus and cortical collecting duct.

It is found in the cell membrane. The catalysed reaction is thymidine(out) + 2 Na(+)(out) = thymidine(in) + 2 Na(+)(in). The enzyme catalyses cytidine(out) + 2 Na(+)(out) = cytidine(in) + 2 Na(+)(in). It carries out the reaction uridine(out) + 2 Na(+)(out) = uridine(in) + 2 Na(+)(in). It catalyses the reaction adenosine(out) + 2 Na(+)(out) = adenosine(in) + 2 Na(+)(in). The catalysed reaction is guanosine(out) + 2 Na(+)(out) = guanosine(in) + 2 Na(+)(in). The enzyme catalyses inosine(out) + 2 Na(+)(out) = inosine(in) + 2 Na(+)(in). Sodium-dependent, pyrimidine- and purine-selective. Involved in the homeostasis of endogenous nucleosides. Exhibits the transport characteristics of the nucleoside transport system cib or N3 subtype (N3/cib) (with marked transport of both thymidine and inosine). Employs a 2:1 sodium/nucleoside ratio. Also able to transport gemcitabine, 3'-azido-3'-deoxythymidine (AZT), ribavirin and 3-deazauridine. The polypeptide is Solute carrier family 28 member 3 (Slc28a3) (Rattus norvegicus (Rat)).